The primary structure comprises 188 residues: Elongation factor P (188 aa).

Belongs to the elongation factor P family.

The protein resides in the cytoplasm. The protein operates within protein biosynthesis; polypeptide chain elongation. Functionally, involved in peptide bond synthesis. Stimulates efficient translation and peptide-bond synthesis on native or reconstituted 70S ribosomes in vitro. Probably functions indirectly by altering the affinity of the ribosome for aminoacyl-tRNA, thus increasing their reactivity as acceptors for peptidyl transferase. In Rhodopseudomonas palustris (strain TIE-1), this protein is Elongation factor P.